Here is a 145-residue protein sequence, read N- to C-terminus: uncharacterized protein (145 aa).

Positions 1-20 (MKTCTVICCTALVLGLTAYA) are cleaved as a signal peptide.

This is an uncharacterized protein from Aedes vexans (Inland floodwater mosquito).